Here is a 411-residue protein sequence, read N- to C-terminus: MTAQTPIHVYSEIGKLKKVLLHRPGKEIENLMPDYLERLLFDDIPFLEDAQKEHDAFAQALRDEGIEVLYLETLAAESLVTPEIREAFIDEYLSEANIRGRATKKAIRELLMAIEDNQELIEKTMAGVQKSELPEIPASEKGLTDLVESNYPFAIDPMPNLYFTRDPFATIGTGVSLNHMFSETRNRETLYGKYIFTHHPIYGGGKVPMVYDRNETTRIEGGDELVLSKDVLAVGISQRTDAASIEKLLVNIFKQNLGFKKVLAFEFANNRKFMHLDTVFTMVDYDKFTIHPEIEGDLRVYSVTYDNEELHIVEEKGDLAELLAANLGVEKVDLIRCGGDNLVAAGREQWNDGSNTLTIAPGVVVVYNRNTITNAILESKGLKLIKIHGSELVRGRGGPRCMSMPFEREDI.

Cys401 functions as the Amidino-cysteine intermediate in the catalytic mechanism.

It belongs to the arginine deiminase family. In terms of processing, glycosylated.

The protein localises to the cytoplasm. The catalysed reaction is L-arginine + H2O = L-citrulline + NH4(+). Its pathway is amino-acid degradation; L-arginine degradation via ADI pathway; carbamoyl phosphate from L-arginine: step 1/2. The polypeptide is Arginine deiminase (arcA) (Streptococcus pyogenes serotype M1).